Consider the following 56-residue polypeptide: Metallothionein (56 aa).

Zn(2+) is bound by residues Cys9, Cys11, Cys14, Cys16, Cys32, Cys36, His40, Cys47, His49, Cys52, and Cys54.

Belongs to the metallothionein superfamily. Type 14 family.

Functionally, may play a role in essential metal ion homeostasis (especially zinc homeostasis) and resistance to certain non-essential metal ions. Binds four zinc ions. The sequence is that of Metallothionein (smtA) from Synechococcus elongatus (strain ATCC 33912 / PCC 7942 / FACHB-805) (Anacystis nidulans R2).